The primary structure comprises 271 residues: Phosphatidylglycerol--prolipoprotein diacylglyceryl transferase (271 aa).

Transmembrane regions (helical) follow at residues 18–38 (IFGL…LVAL), 60–80 (YFIW…ILIY), 103–123 (FVGI…IATY), 137–157 (LDLV…GNFL), 181–201 (PSQL…LLLI), 209–229 (GELI…CEFF), and 236–256 (IGFV…MFLL). Arg-152 contributes to the a 1,2-diacyl-sn-glycero-3-phospho-(1'-sn-glycerol) binding site.

Belongs to the Lgt family.

The protein localises to the cell inner membrane. The catalysed reaction is L-cysteinyl-[prolipoprotein] + a 1,2-diacyl-sn-glycero-3-phospho-(1'-sn-glycerol) = an S-1,2-diacyl-sn-glyceryl-L-cysteinyl-[prolipoprotein] + sn-glycerol 1-phosphate + H(+). It functions in the pathway protein modification; lipoprotein biosynthesis (diacylglyceryl transfer). Its function is as follows. Catalyzes the transfer of the diacylglyceryl group from phosphatidylglycerol to the sulfhydryl group of the N-terminal cysteine of a prolipoprotein, the first step in the formation of mature lipoproteins. The protein is Phosphatidylglycerol--prolipoprotein diacylglyceryl transferase of Campylobacter lari (strain RM2100 / D67 / ATCC BAA-1060).